Here is a 329-residue protein sequence, read N- to C-terminus: Putative HTH-type transcriptional regulatory protein APE_0778 (329 aa).

Residues 142–200 (LREKRLEKGLSLGHLAYMLKTSRKSIYEYERGVMSPSVEKAEKLVDILGEEILEPIDIL) enclose the HTH cro/C1-type domain. The segment at residues 153–172 (LGHLAYMLKTSRKSIYEYER) is a DNA-binding region (H-T-H motif).

The protein is Putative HTH-type transcriptional regulatory protein APE_0778 of Aeropyrum pernix (strain ATCC 700893 / DSM 11879 / JCM 9820 / NBRC 100138 / K1).